The chain runs to 287 residues: Spermidine/putrescine transport system permease protein PotB (287 aa).

The Cytoplasmic portion of the chain corresponds to 1–10 (MKNTSKFQNV). The chain crosses the membrane as a helical span at residues 11 to 31 (VIVTIVGWLVLFVFLPNLMII). Residues 32 to 70 (GTSFLTRDDASFVKMVFTLDNYARLLDPLYFEVLLHSLN) are Periplasmic-facing. One can recognise an ABC transmembrane type-1 domain in the interval 65–271 (LLHSLNMALI…IVMGLMLLIY (207 aa)). A helical membrane pass occupies residues 71–91 (MALIATLSCLVLGYPFAWFLA). The Cytoplasmic portion of the chain corresponds to 92–99 (KLPEKIRP). A helical membrane pass occupies residues 100-120 (LLLFLLIVPFWTNSLIRIYGL). Residues 121-145 (KIFLSTKGYLNEFLLWLGVIDTPIR) are Periplasmic-facing. Residues 146 to 166 (IMFTPSAVIIGLVYILLPFMV) form a helical membrane-spanning segment. Over 167-197 (MPLYSSIEKLDKPLLEAARDLGASKMQTFIR) the chain is Cytoplasmic. Residues 198-218 (IIIPLTMPGIVAGCLLVMLPA) form a helical membrane-spanning segment. The Periplasmic portion of the chain corresponds to 219-251 (MGLFYVSDLMGGAKNLLIGNVIKVQFLNIRDWP). Residues 252-272 (FGAATSITLTIVMGLMLLIYW) traverse the membrane as a helical segment. Over 273 to 287 (RASRLLNKKVSDISD) the chain is Cytoplasmic.

The protein belongs to the binding-protein-dependent transport system permease family. CysTW subfamily.

The protein resides in the cell inner membrane. Functionally, required for the activity of the bacterial periplasmic transport system of putrescine and spermidine. This is Spermidine/putrescine transport system permease protein PotB (potB) from Salmonella typhi.